A 217-amino-acid polypeptide reads, in one-letter code: Frizzled-8 (217 aa).

The Extracellular portion of the chain corresponds to 1–26; it reads AGAAELQPELAVAEHVRYESTGPALC. The chain crosses the membrane as a helical span at residues 27–47; that stretch reads TVVFLLVYFFGMASSIWWVIL. Residues 48-69 lie on the Cytoplasmic side of the membrane; the sequence is SLTWFLAAGMKWGNEAIAGYAQ. A helical transmembrane segment spans residues 70-90; the sequence is YFHLAAWLLPSVKSIAVLALS. Residues 91-113 are Extracellular-facing; the sequence is SVDGDPVAGICYVGNQSLENLRG. Residue Asn105 is glycosylated (N-linked (GlcNAc...) asparagine). Residues 114–134 form a helical membrane-spanning segment; the sequence is FVLAPLVVYLFTGSLFLLAGF. The Cytoplasmic portion of the chain corresponds to 135-160; sequence VSLFRIRSVIKQGGTKTDKLEKLMIR. A helical membrane pass occupies residues 161-181; sequence IGIFTVLYTVPATIVIACYIY. At 182–209 the chain is on the extracellular side; that stretch reads EQHNREAWEQAQNCSCPGDPHRPKPDYA. An N-linked (GlcNAc...) asparagine glycan is attached at Asn194. A helical membrane pass occupies residues 210–217; the sequence is VFMLKYFM.

Belongs to the G-protein coupled receptor Fz/Smo family.

The protein resides in the membrane. It localises to the cell membrane. In terms of biological role, receptor for Wnt proteins. Most of frizzled receptors are coupled to the beta-catenin canonical signaling pathway, which leads to the activation of disheveled proteins, inhibition of GSK-3 kinase, nuclear accumulation of beta-catenin and activation of Wnt target genes. A second signaling pathway involving PKC and calcium fluxes has been seen for some family members, but it is not yet clear if it represents a distinct pathway or if it can be integrated in the canonical pathway, as PKC seems to be required for Wnt-mediated inactivation of GSK-3 kinase. Both pathways seem to involve interactions with G-proteins. May be involved in transduction and intercellular transmission of polarity information during tissue morphogenesis and/or in differentiated tissues. In Gallus gallus (Chicken), this protein is Frizzled-8 (FZD8).